We begin with the raw amino-acid sequence, 208 residues long: Thiamine-phosphate synthase (208 aa).

4-amino-2-methyl-5-(diphosphooxymethyl)pyrimidine is bound by residues 37 to 39 and N70; that span reads QVR. Residues D71 and D90 each contribute to the Mg(2+) site. T109 provides a ligand contact to 4-amino-2-methyl-5-(diphosphooxymethyl)pyrimidine. 135–137 provides a ligand contact to 2-[(2R,5Z)-2-carboxy-4-methylthiazol-5(2H)-ylidene]ethyl phosphate; sequence TTS. K138 serves as a coordination point for 4-amino-2-methyl-5-(diphosphooxymethyl)pyrimidine. Position 166 (A166) interacts with 2-[(2R,5Z)-2-carboxy-4-methylthiazol-5(2H)-ylidene]ethyl phosphate.

It belongs to the thiamine-phosphate synthase family. It depends on Mg(2+) as a cofactor.

The catalysed reaction is 2-[(2R,5Z)-2-carboxy-4-methylthiazol-5(2H)-ylidene]ethyl phosphate + 4-amino-2-methyl-5-(diphosphooxymethyl)pyrimidine + 2 H(+) = thiamine phosphate + CO2 + diphosphate. The enzyme catalyses 2-(2-carboxy-4-methylthiazol-5-yl)ethyl phosphate + 4-amino-2-methyl-5-(diphosphooxymethyl)pyrimidine + 2 H(+) = thiamine phosphate + CO2 + diphosphate. It carries out the reaction 4-methyl-5-(2-phosphooxyethyl)-thiazole + 4-amino-2-methyl-5-(diphosphooxymethyl)pyrimidine + H(+) = thiamine phosphate + diphosphate. It functions in the pathway cofactor biosynthesis; thiamine diphosphate biosynthesis; thiamine phosphate from 4-amino-2-methyl-5-diphosphomethylpyrimidine and 4-methyl-5-(2-phosphoethyl)-thiazole: step 1/1. Its function is as follows. Condenses 4-methyl-5-(beta-hydroxyethyl)thiazole monophosphate (THZ-P) and 2-methyl-4-amino-5-hydroxymethyl pyrimidine pyrophosphate (HMP-PP) to form thiamine monophosphate (TMP). The chain is Thiamine-phosphate synthase from Salinispora tropica (strain ATCC BAA-916 / DSM 44818 / JCM 13857 / NBRC 105044 / CNB-440).